Consider the following 261-residue polypeptide: Uridine-cytidine kinase 2-B (261 aa).

ATP is bound at residue 29-37 (GGTASGKSS). Residues D86, Y114, H119, R168, R178, and Q186 each coordinate substrate. D215 contributes to the ATP binding site. The interval 238-261 (RQNGFQNGHGTPRQRRTSESSRPH) is disordered.

Belongs to the uridine kinase family. Homotetramer.

The enzyme catalyses uridine + ATP = UMP + ADP + H(+). The catalysed reaction is cytidine + ATP = CMP + ADP + H(+). It participates in pyrimidine metabolism; CTP biosynthesis via salvage pathway; CTP from cytidine: step 1/3. It functions in the pathway pyrimidine metabolism; UMP biosynthesis via salvage pathway; UMP from uridine: step 1/1. In terms of biological role, phosphorylates uridine and cytidine to uridine monophosphate and cytidine monophosphate. Does not phosphorylate deoxyribonucleosides or purine ribonucleosides. Can use ATP or GTP as a phosphate donor. The sequence is that of Uridine-cytidine kinase 2-B (uck2b) from Danio rerio (Zebrafish).